The primary structure comprises 249 residues: Diaminopimelate epimerase (249 aa).

Residues asparagine 11 and asparagine 60 each coordinate substrate. Cysteine 69 (proton donor) is an active-site residue. Residues 70–71, asparagine 164, and 182–183 each bind substrate; these read GN and ER. The active-site Proton acceptor is cysteine 192. 193–194 provides a ligand contact to substrate; sequence GT.

The protein belongs to the diaminopimelate epimerase family. As to quaternary structure, homodimer.

It is found in the cytoplasm. It carries out the reaction (2S,6S)-2,6-diaminopimelate = meso-2,6-diaminopimelate. It participates in amino-acid biosynthesis; L-lysine biosynthesis via DAP pathway; DL-2,6-diaminopimelate from LL-2,6-diaminopimelate: step 1/1. Catalyzes the stereoinversion of LL-2,6-diaminopimelate (L,L-DAP) to meso-diaminopimelate (meso-DAP), a precursor of L-lysine and an essential component of the bacterial peptidoglycan. The sequence is that of Diaminopimelate epimerase from Campylobacter lari (strain RM2100 / D67 / ATCC BAA-1060).